The following is a 401-amino-acid chain: Adenylosuccinate synthetase (401 aa).

Residues 11–17 (GDEGKGK) and 39–41 (GHT) each bind GTP. Asp-12 functions as the Proton acceptor in the catalytic mechanism. Residues Asp-12 and Gly-39 each contribute to the Mg(2+) site. Residues 12-15 (DEGK), 37-40 (NAGH), Thr-127, Arg-141, Gln-212, Thr-227, and Arg-290 contribute to the IMP site. Residue His-40 is the Proton donor of the active site. 286 to 292 (ATTGRPR) lines the substrate pocket. GTP-binding positions include Arg-292, 318 to 320 (KGD), and 390 to 392 (SVG).

Belongs to the adenylosuccinate synthetase family. Homodimer. The cofactor is Mg(2+).

It is found in the cytoplasm. The catalysed reaction is IMP + L-aspartate + GTP = N(6)-(1,2-dicarboxyethyl)-AMP + GDP + phosphate + 2 H(+). The protein operates within purine metabolism; AMP biosynthesis via de novo pathway; AMP from IMP: step 1/2. Functionally, plays an important role in the de novo pathway of purine nucleotide biosynthesis. Catalyzes the first committed step in the biosynthesis of AMP from IMP. The polypeptide is Adenylosuccinate synthetase (Thermosipho africanus (strain TCF52B)).